The sequence spans 267 residues: Syntaxin-72 (267 aa).

Over 1–244 (MPVIDIIFRV…QLVQMRSSRN (244 aa)) the chain is Cytoplasmic. Residues 53 to 87 (KAELASTEKNRAAAVAMNAEVRRTKARLAEDVVKL) adopt a coiled-coil conformation. In terms of domain architecture, t-SNARE coiled-coil homology spans 173 to 235 (EMRRKKQDEG…KNTNVRLKKQ (63 aa)). A helical; Anchor for type IV membrane protein transmembrane segment spans residues 245 to 265 (FCIDIILLCVILGIVSYIYNA). At 266–267 (LN) the chain is on the vesicular side.

The protein belongs to the syntaxin family. Part of the t-SNARE complex. Expressed in root, leaf, stem, flower and silique.

Its subcellular location is the membrane. Functionally, vesicle trafficking protein that functions in the secretory pathway. The chain is Syntaxin-72 (SYP72) from Arabidopsis thaliana (Mouse-ear cress).